Consider the following 519-residue polypeptide: Maturase K (519 aa).

It belongs to the intron maturase 2 family. MatK subfamily.

It is found in the plastid. The protein localises to the chloroplast. Functionally, usually encoded in the trnK tRNA gene intron. Probably assists in splicing its own and other chloroplast group II introns. The chain is Maturase K from Cycas panzhihuaensis (Dukou cycad).